We begin with the raw amino-acid sequence, 268 residues long: MTTTPFNRLLLTGAAGGLGKVLRERLKGYAEVLRLSDISPMAPAAGPHEEVITCDLADKAAVHTLVEGVDAIIHFGGVSTEHAFEEILGPNICGVFHVYEAARKHGVKRIIFASSNHTIGFYRQDERIDAHAPRRPDSYYGLSKCYGEDVASFYFDRYGIETVSIRIGSSFPQPQNLRMLCTWLSYDDLVQLIERGLFTPGVGHTIVYGASDNRTVWWDNRHAAHLGYVPKDSSETFRAAVEAQPAPAADDPSMVYQGGAFAVAGPFN.

NAD(+) is bound by residues 17–18 (GL), 37–39 (DIS), 55–56 (DL), and 75–79 (FGGVS). Residues Ser79 and 115-117 (SNH) contribute to the substrate site. Tyr140 serves as the catalytic Proton acceptor. Lys144 lines the NAD(+) pocket. Residue Ser169 coordinates substrate. An NAD(+)-binding site is contributed by Ser170. Arg178 provides a ligand contact to substrate.

The protein belongs to the NAD(P)-dependent epimerase/dehydratase family. As to quaternary structure, homohexamer.

The catalysed reaction is beta-D-galacturonate + NAD(+) = D-galactaro-1,5-lactone + NADH + H(+). The enzyme catalyses beta-D-glucuronate + NAD(+) = D-glucaro-1,5-lactone + NADH + H(+). The protein operates within carbohydrate acid metabolism; D-galacturonate degradation via prokaryotic oxidative pathway. Its function is as follows. Catalyzes the oxidation of beta-D-galacturonate and beta-D-glucuronate to galactarate and D-glucarate, respectively. In Pseudomonas putida (strain ATCC 47054 / DSM 6125 / CFBP 8728 / NCIMB 11950 / KT2440), this protein is Uronate dehydrogenase (udh).